Consider the following 696-residue polypeptide: Methionine--tRNA ligase (696 aa).

Positions 12–22 (PYANGAIHLGH) match the 'HIGH' region motif. The Zn(2+) site is built by Cys-143, Cys-146, Cys-156, and Cys-159. A 'KMSKS' region motif is present at residues 336-340 (KMSKS). Lys-339 provides a ligand contact to ATP. Residues 556–580 (SLAPAPEAQSQQRHAEHQQNEVTAE) are disordered. The region spanning 591 to 696 (DFMKVDLRIV…SGAQPGMRVK (106 aa)) is the tRNA-binding domain.

It belongs to the class-I aminoacyl-tRNA synthetase family. MetG type 1 subfamily. In terms of assembly, homodimer. It depends on Zn(2+) as a cofactor.

The protein localises to the cytoplasm. The catalysed reaction is tRNA(Met) + L-methionine + ATP = L-methionyl-tRNA(Met) + AMP + diphosphate. Functionally, is required not only for elongation of protein synthesis but also for the initiation of all mRNA translation through initiator tRNA(fMet) aminoacylation. This Dechloromonas aromatica (strain RCB) protein is Methionine--tRNA ligase.